A 261-amino-acid polypeptide reads, in one-letter code: Cytochrome c oxidase subunit 3 (261 aa).

Residues 1 to 15 are Mitochondrial matrix-facing; sequence MTHQTHAYHMVNPSP. Residues 16-34 traverse the membrane as a helical segment; sequence WPLTGALSALLMTSGLAMW. Residues 35–40 lie on the Mitochondrial intermembrane side of the membrane; that stretch reads FHYNLT. The chain crosses the membrane as a helical span at residues 41–66; the sequence is LLLTLGMTTNLLTMYQWWRDIIREST. Residues 67–72 lie on the Mitochondrial matrix side of the membrane; the sequence is FQGHHT. The chain crosses the membrane as a helical span at residues 73 to 105; sequence PIVQKGLRYGMILFIISEVFFFAGFFWAFYHSS. Residues 106 to 128 lie on the Mitochondrial intermembrane side of the membrane; that stretch reads LAPTPELGGCWPPTGIIPLNPLE. The chain crosses the membrane as a helical span at residues 129 to 152; the sequence is VPLLNTSVLLASGVSITWAHHSLM. The Mitochondrial matrix segment spans residues 153 to 155; sequence EGN. The helical transmembrane segment at 156–183 threads the bilayer; the sequence is RKHMLQALFITISLGVYFTLLQASEYYE. The Mitochondrial intermembrane portion of the chain corresponds to 184-190; that stretch reads TSFTISD. A helical transmembrane segment spans residues 191 to 223; sequence GVYGSTFFMATGFHGLHVIIGSTFLIVCFLRQL. At 224 to 232 the chain is on the mitochondrial matrix side; the sequence is KYHFTSNHH. A helical membrane pass occupies residues 233–256; sequence FGFEAAAWYWHFVDVVWLFLYVSI. Residues 257-261 lie on the Mitochondrial intermembrane side of the membrane; the sequence is YWWGS.

It belongs to the cytochrome c oxidase subunit 3 family. In terms of assembly, component of the cytochrome c oxidase (complex IV, CIV), a multisubunit enzyme composed of 14 subunits. The complex is composed of a catalytic core of 3 subunits MT-CO1, MT-CO2 and MT-CO3, encoded in the mitochondrial DNA, and 11 supernumerary subunits COX4I, COX5A, COX5B, COX6A, COX6B, COX6C, COX7A, COX7B, COX7C, COX8 and NDUFA4, which are encoded in the nuclear genome. The complex exists as a monomer or a dimer and forms supercomplexes (SCs) in the inner mitochondrial membrane with NADH-ubiquinone oxidoreductase (complex I, CI) and ubiquinol-cytochrome c oxidoreductase (cytochrome b-c1 complex, complex III, CIII), resulting in different assemblies (supercomplex SCI(1)III(2)IV(1) and megacomplex MCI(2)III(2)IV(2)).

The protein localises to the mitochondrion inner membrane. The enzyme catalyses 4 Fe(II)-[cytochrome c] + O2 + 8 H(+)(in) = 4 Fe(III)-[cytochrome c] + 2 H2O + 4 H(+)(out). Component of the cytochrome c oxidase, the last enzyme in the mitochondrial electron transport chain which drives oxidative phosphorylation. The respiratory chain contains 3 multisubunit complexes succinate dehydrogenase (complex II, CII), ubiquinol-cytochrome c oxidoreductase (cytochrome b-c1 complex, complex III, CIII) and cytochrome c oxidase (complex IV, CIV), that cooperate to transfer electrons derived from NADH and succinate to molecular oxygen, creating an electrochemical gradient over the inner membrane that drives transmembrane transport and the ATP synthase. Cytochrome c oxidase is the component of the respiratory chain that catalyzes the reduction of oxygen to water. Electrons originating from reduced cytochrome c in the intermembrane space (IMS) are transferred via the dinuclear copper A center (CU(A)) of subunit 2 and heme A of subunit 1 to the active site in subunit 1, a binuclear center (BNC) formed by heme A3 and copper B (CU(B)). The BNC reduces molecular oxygen to 2 water molecules using 4 electrons from cytochrome c in the IMS and 4 protons from the mitochondrial matrix. This is Cytochrome c oxidase subunit 3 (MT-CO3) from Felis catus (Cat).